Here is a 497-residue protein sequence, read N- to C-terminus: L-amino-acid oxidase BjussuLAAO-I (497 aa).

A signal peptide spans 1–13 (MNVFFMFSKPGKL). C23 and C186 are disulfide-bonded. FAD is bound by residues 56-57 (MS), 76-77 (EA), 76-80 (EASER), Q84, and 100-103 (GPMR). R103 contributes to the substrate binding site. N185 carries an N-linked (GlcNAc...) asparagine glycan. H236 serves as a coordination point for substrate. V274 is a binding site for FAD. A disulfide bridge connects residues C344 and C425. Residue Y385 coordinates substrate. FAD contacts are provided by residues E470, 477–482 (GWIAST), and 478–482 (WIAST). A substrate-binding site is contributed by 477–478 (GW).

Belongs to the flavin monoamine oxidase family. FIG1 subfamily. In terms of assembly, homodimer; non-covalently linked. The cofactor is FAD. As to expression, expressed by the venom gland.

The protein localises to the secreted. The catalysed reaction is an L-alpha-amino acid + O2 + H2O = a 2-oxocarboxylate + H2O2 + NH4(+). It catalyses the reaction L-leucine + O2 + H2O = 4-methyl-2-oxopentanoate + H2O2 + NH4(+). The enzyme catalyses L-phenylalanine + O2 + H2O = 3-phenylpyruvate + H2O2 + NH4(+). It carries out the reaction L-tryptophan + O2 + H2O = indole-3-pyruvate + H2O2 + NH4(+). The catalysed reaction is L-methionine + O2 + H2O = 4-methylsulfanyl-2-oxobutanoate + H2O2 + NH4(+). It catalyses the reaction L-isoleucine + O2 + H2O = (S)-3-methyl-2-oxopentanoate + H2O2 + NH4(+). The enzyme catalyses L-tyrosine + O2 + H2O = 3-(4-hydroxyphenyl)pyruvate + H2O2 + NH4(+). It carries out the reaction L-cysteine + O2 + H2O = 2-oxo-3-sulfanylpropanoate + H2O2 + NH4(+). Catalyzes an oxidative deamination of predominantly hydrophobic and aromatic L-amino acids, thus producing hydrogen peroxide that may contribute to the diverse toxic effects of this enzyme. Shows high specificity for L-Met, L-Leu, L-Phe, L-Tyr, L-Ile, L-Trp, a moderate activity on L-Cys and low activity on L-Val, L-Lys, L-Arg, L-His, L-Gln, L-Thr and L-Ser. Exhibits diverse biological activities, such as hemorrhage, hemolysis, edema, apoptosis of vascular endothelial cells or tumor cell lines, and antibacterial, as well as regulation of platelet aggregation. Effects of snake L-amino oxidases on platelets are controversial, since they either induce aggregation or inhibit agonist-induced aggregation. These different effects are probably due to different experimental conditions. In vitro, shows parasiticidal activities against both trypanosomes and leishmania, as a result of enzyme-catalyzed hydrogen peroxide production. This Bothrops jararacussu (Jararacussu) protein is L-amino-acid oxidase BjussuLAAO-I.